A 130-amino-acid chain; its full sequence is Phosphoribosyl-ATP pyrophosphatase (130 aa).

Belongs to the PRA-PH family.

The protein localises to the cytoplasm. The catalysed reaction is 1-(5-phospho-beta-D-ribosyl)-ATP + H2O = 1-(5-phospho-beta-D-ribosyl)-5'-AMP + diphosphate + H(+). It participates in amino-acid biosynthesis; L-histidine biosynthesis; L-histidine from 5-phospho-alpha-D-ribose 1-diphosphate: step 2/9. This is Phosphoribosyl-ATP pyrophosphatase from Albidiferax ferrireducens (strain ATCC BAA-621 / DSM 15236 / T118) (Rhodoferax ferrireducens).